Here is a 236-residue protein sequence, read N- to C-terminus: Small ribosomal subunit protein uS2c (236 aa).

The protein belongs to the universal ribosomal protein uS2 family.

Its subcellular location is the plastid. It localises to the chloroplast. The sequence is that of Small ribosomal subunit protein uS2c (rps2) from Carica papaya (Papaya).